A 276-amino-acid polypeptide reads, in one-letter code: Tryptophan synthase alpha chain (276 aa).

Residues Glu55 and Asp66 each act as proton acceptor in the active site.

Belongs to the TrpA family. Tetramer of two alpha and two beta chains.

It carries out the reaction (1S,2R)-1-C-(indol-3-yl)glycerol 3-phosphate + L-serine = D-glyceraldehyde 3-phosphate + L-tryptophan + H2O. It participates in amino-acid biosynthesis; L-tryptophan biosynthesis; L-tryptophan from chorismate: step 5/5. Its function is as follows. The alpha subunit is responsible for the aldol cleavage of indoleglycerol phosphate to indole and glyceraldehyde 3-phosphate. This Gloeobacter violaceus (strain ATCC 29082 / PCC 7421) protein is Tryptophan synthase alpha chain.